Here is a 515-residue protein sequence, read N- to C-terminus: UBP3-associated protein BRE5 (515 aa).

One can recognise an NTF2 domain in the interval 8–140 (ICFAFLQNYY…FDITNDIIRF (133 aa)). Positions 157–166 (QSNEENSVSA) are enriched in low complexity. 2 disordered regions span residues 157-410 (QSNE…PVFS) and 485-515 (KTVK…KRKD). A compositionally biased stretch (basic and acidic residues) spans 168-201 (EEDKIRHESGVEKEKEKEKSPEISKPKAKKETVK). Ser-187 carries the phosphoserine modification. Polar residues predominate over residues 202 to 213 (DTTAPTESSTQE). Composition is skewed to basic and acidic residues over residues 262-282 (LNEK…KEGS) and 299-319 (EVSD…EIKP). Residue Ser-282 is modified to Phosphoserine. Residues 330 to 341 (SGNNASTPSSSP) show a composition bias toward polar residues. Phosphothreonine is present on Thr-336. At Ser-340 the chain carries Phosphoserine. Over residues 374–396 (IRPETLPKKPTERKFEMGNRRDN) the composition is skewed to basic and acidic residues. Ser-398 is modified (phosphoserine). The 77-residue stretch at 418–494 (YPIYIRGTNG…KTVKKPTSNN (77 aa)) folds into the RRM domain. The span at 489-503 (KPTSNNPPGIFTNGT) shows a compositional bias: polar residues. Over residues 504-515 (RSHRKQPLKRKD) the composition is skewed to basic residues.

In terms of assembly, heterotetramer with UBP3; contains two molecules of BRE5 and two molecules of UBP3. Forms a complex composed of CDC48, DOA1, deubiquitinase UBP3 and probably BRE5. Within the complex, interacts (via C-terminus) with CDC48; the interaction is direct and UBP3-independent.

In terms of biological role, has a role in de-ubiquitination. In conjunction with UBP3, cleaves ubiquitin, leading to the subsequent mono-ubiquitination of sec23. This chain is UBP3-associated protein BRE5 (BRE5), found in Saccharomyces cerevisiae (strain ATCC 204508 / S288c) (Baker's yeast).